Reading from the N-terminus, the 391-residue chain is DNA polymerase IV (391 aa).

The UmuC domain maps to 6 to 187; that stretch reads IIHVDMDAFF…LPVEMLWGVG (182 aa). The Mg(2+) site is built by Asp10 and Asp105. Glu106 is a catalytic residue.

The protein belongs to the DNA polymerase type-Y family. Monomer. Mg(2+) serves as cofactor.

It localises to the cytoplasm. The enzyme catalyses DNA(n) + a 2'-deoxyribonucleoside 5'-triphosphate = DNA(n+1) + diphosphate. Functionally, poorly processive, error-prone DNA polymerase involved in untargeted mutagenesis. Copies undamaged DNA at stalled replication forks, which arise in vivo from mismatched or misaligned primer ends. These misaligned primers can be extended by PolIV. Exhibits no 3'-5' exonuclease (proofreading) activity. May be involved in translesional synthesis, in conjunction with the beta clamp from PolIII. The protein is DNA polymerase IV of Carboxydothermus hydrogenoformans (strain ATCC BAA-161 / DSM 6008 / Z-2901).